A 193-amino-acid chain; its full sequence is Xanthine phosphoribosyltransferase (193 aa).

Positions 20 and 27 each coordinate xanthine. 128–132 contributes to the 5-phospho-alpha-D-ribose 1-diphosphate binding site; the sequence is ANGQA. Xanthine is bound at residue Lys-156.

It belongs to the purine/pyrimidine phosphoribosyltransferase family. Xpt subfamily. Homodimer.

Its subcellular location is the cytoplasm. The catalysed reaction is XMP + diphosphate = xanthine + 5-phospho-alpha-D-ribose 1-diphosphate. The protein operates within purine metabolism; XMP biosynthesis via salvage pathway; XMP from xanthine: step 1/1. Its function is as follows. Converts the preformed base xanthine, a product of nucleic acid breakdown, to xanthosine 5'-monophosphate (XMP), so it can be reused for RNA or DNA synthesis. The chain is Xanthine phosphoribosyltransferase from Streptococcus pneumoniae serotype 19F (strain G54).